Reading from the N-terminus, the 1153-residue chain is PPi-type phosphoenolpyruvate carboxykinase 2 (1153 aa).

Positions 1085–1131 form a coiled coil; the sequence is RQKLEVAKLNKDLAYLNKTIAEKPRLVETLNKQIAAVKEELQYVSSE.

The protein belongs to the PPi-type phosphoenolpyruvate carboxykinase family. In terms of assembly, monomer and trimer; forms heterotrimers with PEPCK1 and PEPCK3.

Its subcellular location is the cytoplasm. It is found in the cytosol. It catalyses the reaction oxaloacetate + diphosphate = phosphoenolpyruvate + phosphate + CO2. In terms of biological role, inorganic pyrophosphate (PPi)-dependent phosphoenolpyruvate carboxykinase, which regulates the carbon flow of the central metabolism by fixing CO(2) to phosphoenolpyruvate to produce oxaloacetate. Can also produce pyruvate and diphosphate from phosphoenolpyruvate and phosphate. This Entamoeba histolytica (strain ATCC 30459 / HM-1:IMSS / ABRM) protein is PPi-type phosphoenolpyruvate carboxykinase 2.